Here is a 272-residue protein sequence, read N- to C-terminus: MGNTTSDRVSGERHGAKAARSEGAGGHAPGKEHKIMVGSTDDPSVFSLPDSKLPGDKEFVSWQQDLEDSVKPTQQARPTVIRWSEGGKEVFISGSFNNWSTKIPLIKSHNDFVAILDLPEGEHQYKFFVDGQWVHDPSEPVVTSQLGTINNLIHVKKSDFEVFDALKLDSMESSETSCRDLSSSPPGPYGQEMYAFRSEERFKSPPILPPHLLQVILNKDTNISCDPALLPEPNHVMLNHLYALSIKDSVMVLSATHRYKKKYVTTLLYKPI.

The interval 1–52 is disordered; sequence MGNTTSDRVSGERHGAKAARSEGAGGHAPGKEHKIMVGSTDDPSVFSLPDSK. Phosphoserine is present on serine 39. At threonine 40 the chain carries Phosphothreonine. Serine 69 carries the post-translational modification Phosphoserine; by ULK1. Residues serine 95 and serine 108 each carry the phosphoserine modification. Residue threonine 148 is modified to Phosphothreonine. 4 positions are modified to phosphoserine: serine 158, serine 170, serine 174, and serine 184.

It belongs to the 5'-AMP-activated protein kinase beta subunit family. AMPK is a heterotrimer of an alpha catalytic subunit (PRKAA1 or PRKAA2), a beta (PRKAB1 or PRKAB2) and a gamma non-catalytic subunits (PRKAG1, PRKAG2 or PRKAG3). In terms of processing, phosphorylated when associated with the catalytic subunit (PRKAA1 or PRKAA2). Phosphorylated by ULK1 and ULK2; leading to negatively regulate AMPK activity and suggesting the existence of a regulatory feedback loop between ULK1, ULK2 and AMPK.

Functionally, non-catalytic subunit of AMP-activated protein kinase (AMPK), an energy sensor protein kinase that plays a key role in regulating cellular energy metabolism. In response to reduction of intracellular ATP levels, AMPK activates energy-producing pathways and inhibits energy-consuming processes: inhibits protein, carbohydrate and lipid biosynthesis, as well as cell growth and proliferation. AMPK acts via direct phosphorylation of metabolic enzymes, and by longer-term effects via phosphorylation of transcription regulators. Also acts as a regulator of cellular polarity by remodeling the actin cytoskeleton; probably by indirectly activating myosin. Beta non-catalytic subunit acts as a scaffold on which the AMPK complex assembles, via its C-terminus that bridges alpha (PRKAA1 or PRKAA2) and gamma subunits (PRKAG1, PRKAG2 or PRKAG3). The sequence is that of 5'-AMP-activated protein kinase subunit beta-2 (PRKAB2) from Homo sapiens (Human).